Reading from the N-terminus, the 288-residue chain is 4-diphosphocytidyl-2-C-methyl-D-erythritol kinase (288 aa).

Residue Lys-11 is part of the active site. 100 to 110 (PIAAGLGSGSS) is an ATP binding site. Residue Asp-140 is part of the active site.

It belongs to the GHMP kinase family. IspE subfamily.

It carries out the reaction 4-CDP-2-C-methyl-D-erythritol + ATP = 4-CDP-2-C-methyl-D-erythritol 2-phosphate + ADP + H(+). Its pathway is isoprenoid biosynthesis; isopentenyl diphosphate biosynthesis via DXP pathway; isopentenyl diphosphate from 1-deoxy-D-xylulose 5-phosphate: step 3/6. In terms of biological role, catalyzes the phosphorylation of the position 2 hydroxy group of 4-diphosphocytidyl-2C-methyl-D-erythritol. In Wolbachia pipientis wMel, this protein is 4-diphosphocytidyl-2-C-methyl-D-erythritol kinase.